Here is a 278-residue protein sequence, read N- to C-terminus: Shikimate dehydrogenase (NADP(+)) (278 aa).

Shikimate is bound by residues 19 to 21 and T66; that span reads SRS. Residue K70 is the Proton acceptor of the active site. An NADP(+)-binding site is contributed by D82. N91 and D107 together coordinate shikimate. Residues 133 to 137, 157 to 162, and I222 each bind NADP(+); these read GAGGA and NRTRAK. Position 224 (Y224) interacts with shikimate. G245 contributes to the NADP(+) binding site.

It belongs to the shikimate dehydrogenase family. Homodimer.

It catalyses the reaction shikimate + NADP(+) = 3-dehydroshikimate + NADPH + H(+). It participates in metabolic intermediate biosynthesis; chorismate biosynthesis; chorismate from D-erythrose 4-phosphate and phosphoenolpyruvate: step 4/7. Involved in the biosynthesis of the chorismate, which leads to the biosynthesis of aromatic amino acids. Catalyzes the reversible NADPH linked reduction of 3-dehydroshikimate (DHSA) to yield shikimate (SA). This chain is Shikimate dehydrogenase (NADP(+)), found in Dinoroseobacter shibae (strain DSM 16493 / NCIMB 14021 / DFL 12).